Here is an 85-residue protein sequence, read N- to C-terminus: Large ribosomal subunit protein bL27 (85 aa).

A disordered region spans residues 1–26 (MAHKKAGGSTRNGRDSESKRLGVKRF).

It belongs to the bacterial ribosomal protein bL27 family.

The chain is Large ribosomal subunit protein bL27 from Saccharophagus degradans (strain 2-40 / ATCC 43961 / DSM 17024).